A 1801-amino-acid chain; its full sequence is Laminin subunit beta-2 (1801 aa).

A signal peptide spans 1 to 35; sequence MEWASGKPGRGRQGQPVPWELRLGLLLSVLAATLA. The Laminin N-terminal domain occupies 46–285; that stretch reads SRGSCYPATG…ALYELVIRGN (240 aa). The N-linked (GlcNAc...) asparagine glycan is linked to Asn-251. Cystine bridges form between Cys-286-Cys-295, Cys-288-Cys-313, Cys-315-Cys-324, Cys-327-Cys-347, Cys-350-Cys-359, Cys-352-Cys-377, Cys-380-Cys-389, Cys-392-Cys-410, Cys-413-Cys-426, Cys-415-Cys-441, Cys-443-Cys-452, Cys-455-Cys-470, Cys-473-Cys-487, Cys-475-Cys-494, Cys-496-Cys-505, Cys-508-Cys-522, Cys-525-Cys-537, Cys-527-Cys-544, and Cys-546-Cys-555. 4 consecutive Laminin EGF-like domains span residues 286-349, 350-412, 413-472, and 473-524; these read CFCY…ACRK, CECN…ACRP, CDCD…GCQR, and CQCN…GCRP. A glycan (N-linked (GlcNAc...) asparagine) is linked at Asn-371. Residues 525–555 form the Laminin EGF-like 5; truncated domain; sequence CDCDVGGALDPQCDEATGQCPCRPHMIGRRC. A Laminin IV type B domain is found at 564-780; that stretch reads RPFLDHLTWE…LLISASSLVY (217 aa). 32 disulfide bridges follow: Cys-786–Cys-798, Cys-788–Cys-805, Cys-807–Cys-816, Cys-819–Cys-831, Cys-834–Cys-846, Cys-836–Cys-853, Cys-855–Cys-864, Cys-867–Cys-877, Cys-880–Cys-889, Cys-882–Cys-896, Cys-899–Cys-908, Cys-911–Cys-927, Cys-930–Cys-946, Cys-932–Cys-957, Cys-959–Cys-968, Cys-971–Cys-986, Cys-989–Cys-1003, Cys-991–Cys-1010, Cys-1013–Cys-1022, Cys-1025–Cys-1038, Cys-1041–Cys-1061, Cys-1043–Cys-1068, Cys-1070–Cys-1079, Cys-1082–Cys-1095, Cys-1098–Cys-1110, Cys-1100–Cys-1117, Cys-1119–Cys-1128, Cys-1131–Cys-1143, Cys-1146–Cys-1158, Cys-1148–Cys-1165, Cys-1167–Cys-1176, and Cys-1179–Cys-1190. Laminin EGF-like domains are found at residues 786–833, 834–879, 880–929, 930–988, 989–1040, 1041–1097, 1098–1145, and 1146–1192; these read CQCD…GCQA, CQCS…NCRP, CVCN…QCRP, CPCP…RCQL, CECS…SCHR, CTCN…GCQP, CACH…QCRA, and CDCD…ACHP. An N-linked (GlcNAc...) asparagine glycan is attached at Asn-1088. The interval 1193-1412 is domain II; that stretch reads CHACFGDWDR…LSLTGVNELV (220 aa). An N-linked (GlcNAc...) asparagine glycan is attached at Asn-1252. Residues 1259–1306 are a coiled coil; it reads AKLVEATEGLRHEIGKTTERLTQLEAELTDVQDENFNANHALSGLERD. N-linked (GlcNAc...) asparagine glycosylation is found at Asn-1311 and Asn-1351. A domain alpha region spans residues 1413 to 1445; it reads CGAPGDAPCATSPCGGAGCRDEDGQPRCGGLGC. Positions 1446 to 1801 are domain I; it reads SGAAATADLA…LQVQIYNTCQ (356 aa). Residues 1475-1529 adopt a coiled-coil conformation; it reads GILSRVSETRRQAEEAQQRAQAALDKANASRGQVEQANQELRELIQNVKDFLSQE. An N-linked (GlcNAc...) asparagine glycan is attached at Asn-1502. Ser-1535 is modified (phosphoserine). Residues 1576–1793 adopt a coiled-coil conformation; the sequence is LAHTMGDVRR…RSVLQAINLQ (218 aa). Low complexity predominate over residues 1684 to 1694; the sequence is ASTAEETAGSA. Residues 1684 to 1703 form a disordered region; it reads ASTAEETAGSAQSRAREAEK.

As to quaternary structure, laminin is a complex glycoprotein, consisting of three different polypeptide chains (alpha, beta, gamma), which are bound to each other by disulfide bonds into a cross-shaped molecule comprising one long and three short arms with globules at each end. Beta-2 is a subunit of laminin-3 (laminin-121 or S-laminin), laminin-4 (laminin-221 or S-merosin), laminin-7 (laminin-321 or KS-laminin), laminin-9 (laminin-421), laminin-11 (laminin-521), laminin-14 (laminin-423) and laminin-15 (laminin-523). Found in the basement membranes (major component). S-laminin is concentrated in the synaptic cleft of the neuromuscular junction.

The protein localises to the secreted. It localises to the extracellular space. It is found in the extracellular matrix. Its subcellular location is the basement membrane. In terms of biological role, binding to cells via a high affinity receptor, laminin is thought to mediate the attachment, migration and organization of cells into tissues during embryonic development by interacting with other extracellular matrix components. The sequence is that of Laminin subunit beta-2 (Lamb2) from Rattus norvegicus (Rat).